The following is an 85-amino-acid chain: Cytochrome c2 (85 aa).

Positions 12, 15, 16, and 61 each coordinate heme c.

Belongs to the cytochrome c family. Binds 1 heme c group covalently per subunit.

In terms of biological role, cytochrome c2 is found mainly in purple, non-sulfur, photosynthetic bacteria where it functions as the electron donor to the oxidized bacteriochlorophyll in the photophosphorylation pathway. However, it may also have a role in the respiratory chain and is found in some non-photosynthetic bacteria. The protein is Cytochrome c2 of Rubrivivax gelatinosus (Rhodocyclus gelatinosus).